The primary structure comprises 312 residues: Elongation factor Ts (312 aa).

Residues 80 to 83 (TDFV) are involved in Mg(2+) ion dislocation from EF-Tu.

Belongs to the EF-Ts family.

It is found in the cytoplasm. In terms of biological role, associates with the EF-Tu.GDP complex and induces the exchange of GDP to GTP. It remains bound to the aminoacyl-tRNA.EF-Tu.GTP complex up to the GTP hydrolysis stage on the ribosome. The sequence is that of Elongation factor Ts from Paramagnetospirillum magneticum (strain ATCC 700264 / AMB-1) (Magnetospirillum magneticum).